A 215-amino-acid polypeptide reads, in one-letter code: Protein FAM27D1 (215 aa).

The tract at residues 74–172 (QPKTHTHTGM…RGTQADLSSR (99 aa)) is disordered. Positions 87–108 (THRERERNTQRLRDRERRENGR) are enriched in basic and acidic residues. Basic residues predominate over residues 109–122 (HTHRHTHTLTHTHT). Basic and acidic residues-rich tracts occupy residues 123–139 (HRDT…ETHT) and 149–162 (SAHD…REQP). Over residues 163-172 (RGTQADLSSR) the composition is skewed to polar residues.

Belongs to the FAM27 family.

In Homo sapiens (Human), this protein is Protein FAM27D1 (FAM27D1).